We begin with the raw amino-acid sequence, 818 residues long: Nibrin (818 aa).

Residues 22–70 (YVVGRKNCEILLTNDQSISRVHAVLTVTEQAVTLKDSSKYGTFVNGEKL) form the FHA domain. 2 BRCT domains span residues 91-168 (SKFS…SALS) and 211-301 (GKTF…LAAI). 3 disordered regions span residues 372–716 (AVGE…DLPR), 729–757 (NNSSRSRPGPLQTHNPNDKNVKRFRKKNV), and 793–818 (EEKLNEREETLGDDLFRYNPRPAKKR). Residues 379 to 405 (KTNPTQKASTTNKPLSLGQEPSSTRIV) show a composition bias toward polar residues. Over residues 409–419 (VMSSESFSVVE) the composition is skewed to low complexity. Positions 444 to 469 (APSSGNTTLKHSPQKQTALTSFFQPS) are enriched in polar residues. Positions 470 to 475 (SKKRPR) match the Nuclear localization signal motif. The span at 515–530 (EETSLGQACGTGQNSS) shows a compositional bias: polar residues. The segment covering 549–571 (TAADDLEMSLEELEFLMSDEMDE) has biased composition (acidic residues). Residues 586–602 (GLTSKINSEQLSNQQEV) show a composition bias toward polar residues. The span at 603-612 (TESKGRKGEK) shows a compositional bias: basic and acidic residues. Residues 613–625 (NQQSSSSNIQSMQ) are compositionally biased toward low complexity. Composition is skewed to polar residues over residues 633–644 (VTNQDTQTQSKR) and 653–662 (SSANKGPSKN). Residues 663–675 (KTPELEEVKKEEV) show a composition bias toward basic and acidic residues. Composition is skewed to polar residues over residues 678–692 (VVNSRPQNGISQTSE) and 699–708 (MQASTSNSGP). A compositionally biased stretch (basic and acidic residues) spans 793–808 (EEKLNEREETLGDDLF). The FxF/Y motif signature appears at 804 to 813 (GDDLFRYNPR).

This sequence belongs to the Nibrin family. Component of the MRN complex composed of two heterodimers rad50 and mre11 associated with a single nbn.

The protein resides in the nucleus. The protein localises to the chromosome. It localises to the PML body. It is found in the telomere. Its function is as follows. Component of the MRN complex, which plays a central role in double-strand break (DSB) repair, DNA recombination, maintenance of telomere integrity and meiosis. The MRN complex is involved in the repair of DNA double-strand breaks (DSBs) via homologous recombination (HR), an error-free mechanism which primarily occurs during S and G2 phases. The complex (1) mediates the end resection of damaged DNA, which generates proper single-stranded DNA, a key initial steps in HR, and is (2) required for the recruitment of other repair factors and efficient activation of ATM and ATR upon DNA damage. The MRN complex possesses single-strand endonuclease activity and double-strand-specific 3'-5' exonuclease activity, which are provided by MRE11, to initiate end resection, which is required for single-strand invasion and recombination. Within the MRN complex, nbn acts as a protein-protein adapter, which specifically recognizes and binds phosphorylated proteins, promoting their recruitment to DNA damage sites. Recruits mre11 and rad50 components of the MRN complex to DSBs in response to DNA damage. Promotes the recruitment of PI3/PI4-kinase family members atm, atr, and probably DNA-PKcs to the DNA damage sites, activating their functions. Mediates the recruitment of phosphorylated rbbp8/CtIP to DSBs, leading to cooperation between the MRN complex and rbbp8/CtIP to initiate end resection. The MRN complex and rbbp8/CtIP are also required for chromosome alignment during metaphase. In Danio rerio (Zebrafish), this protein is Nibrin (nbn).